The primary structure comprises 383 residues: Probable cytosolic iron-sulfur protein assembly protein 1 (383 aa).

WD repeat units follow at residues 10-49 (AHND…KFPL), 56-108 (THKR…VEYD), 135-175 (GHEN…EEFE), 182-221 (DHSQ…DEWS), 228-275 (GHEG…EDDE), 302-341 (VHKY…KWVI), and 349-383 (HGVH…LWKI).

It belongs to the WD repeat CIA1 family. Interacts with NAR1.

Its subcellular location is the cytoplasm. The protein resides in the nucleus. Functionally, essential component of the cytosolic iron-sulfur (Fe/S) protein assembly machinery. Required for the maturation of extramitochondrial Fe/S proteins. This Candida albicans (strain SC5314 / ATCC MYA-2876) (Yeast) protein is Probable cytosolic iron-sulfur protein assembly protein 1.